The primary structure comprises 901 residues: MAAQNEQRPERIKTTPYLEGDVLSNDSGPLLSVFALQEIMQKVRQVQADYMTATREVDFTVPDVQKILDDIKTLAAEQVYKIVKIPSISFRHIVMQSRDRVLRVDTYYEEMSQVGDVITEDEPEKFYSTIIKKVRFIREKGSFILHDIPTRDHRGMEVAEPEVLGVEFKNVLPVLTAEHRAMIQNALDGSIIENGNVATRDVDVFIGACSEPIYRIYNRLQGYIEAVQLQELRNSIGWLGRLGQRKRITYSQEVLTDFRRQDTIWVLALQLPVNPQVVWDVPRSSIANLIMNIATCLPTGEYIAPNPRISSITLTQRITTTGPFAILTGSTPTAQQLNDVRKIYLALMFPGQIILDLKIDPGERMDPAVRMVAGVVGHLLFTAGGRFTNLTQDMARQLDIALNDYLLYMYNTRVQVKYGPTGEPLDFQMGRNQYDCNVFRADFATGTGYNGWATIDVEYRDPAPYVHAQRYIRYCGIDSRELINPTTYGIGMTYHCYNEMLRMLVAAGKDSEAAYFRSMLPFHMVRFARINQIINEDLHSVFSLPDDMFNALLPDLIAGAHQNADPVVLDVSWISLWFAFNRSFEPTHRNEMLEIAPLIESVYASELSVMKVDMRHLSLMQRRFPDVLIQARPSHFWKAVLNDSPEAVKAVMNLSHSHNFINIRDMMRWVLLPSLQPSLKLVLEEEAWAAANDFEDLMLTDQVYMHRDMLPEPRLDDIERFRQEGFYYTNMLEAPPEIDRVDQNTYEIARLQANMGQFRAALRRIMDDDDWVRFGGVLRTVRVKFFDARPPDDILQGLPFSYDTNEKGGLSYATIKYATETTIFYLIYNVEFSNTPDSLVLINPTYTMTKVFINKRIVERVRVGQILAVLNRRFVAYKGKMRIMDITQSLKMGTKLAAPTV.

It belongs to the turreted BTV-fold inner capsid family. In terms of assembly, homodecamer; each decamer is made up of two conformers of VP2, called VP2A and VP2B. 12 homodecamers assemble to form an icosahedral capsid.

It localises to the virion. Functionally, inner capsid protein that self-assembles to form an icosahedral capsid with a T=2 symmetry, which consists of 120 copies of VP2, with channels at each of its five-fold vertices. This capsid constitutes the innermost concentric layer of the viral mature particle. This Bluetongue virus 13 (isolate USA) (BTV 13) protein is Inner capsid protein VP3 (Segment-3).